A 359-amino-acid polypeptide reads, in one-letter code: 5-amino-6-(D-ribitylamino)uracil--L-tyrosine 4-hydroxyphenyl transferase (359 aa).

The Radical SAM core domain maps to 45–282; that stretch reads VTYVVNANIN…TYAVSRIFFK (238 aa). [4Fe-4S] cluster-binding residues include Cys-59, Cys-63, and Cys-66.

It belongs to the radical SAM superfamily. CofH family. Consists of two subunits, CofG and CofH. Requires [4Fe-4S] cluster as cofactor.

It carries out the reaction 5-amino-6-(D-ribitylamino)uracil + L-tyrosine + S-adenosyl-L-methionine = 5-amino-5-(4-hydroxybenzyl)-6-(D-ribitylimino)-5,6-dihydrouracil + 2-iminoacetate + 5'-deoxyadenosine + L-methionine + H(+). It participates in cofactor biosynthesis; coenzyme F0 biosynthesis. Functionally, catalyzes the radical-mediated synthesis of 5-amino-5-(4-hydroxybenzyl)-6-(D-ribitylimino)-5,6-dihydrouracil from 5-amino-6-(D-ribitylamino)uracil and L-tyrosine. This chain is 5-amino-6-(D-ribitylamino)uracil--L-tyrosine 4-hydroxyphenyl transferase, found in Methanococcus maripaludis (strain C6 / ATCC BAA-1332).